Reading from the N-terminus, the 267-residue chain is Translation initiation factor 2 subunit alpha (267 aa).

Positions 12 to 83 (GELVVATVKE…RKKQVDVSLK (72 aa)) constitute an S1 motif domain.

The protein belongs to the eIF-2-alpha family. As to quaternary structure, heterotrimer composed of an alpha, a beta and a gamma chain.

Functionally, eIF-2 functions in the early steps of protein synthesis by forming a ternary complex with GTP and initiator tRNA. This is Translation initiation factor 2 subunit alpha from Hyperthermus butylicus (strain DSM 5456 / JCM 9403 / PLM1-5).